Reading from the N-terminus, the 544-residue chain is MLKEHPEMAEAPQQQLGIPVVKLEKELPWGRGREDPSPETFRLRFRQFRYQEAAGPQEALRELQELCRRWLRPELHTKEQILELLVLEQFLTILPREFYAWIREHGPESGKALAAMVEDLTERALEAKAVPCHRQGEQEETALCRGAWEPGIQLGPVEVKPEWGMPPGEGVQGPDPGTEEQLSQDPGDETRAFQEQALPVLQAGPGLPAVNPRDQEMAAGFFTAGSQGLGPFKDMALAFPEEEWRHVTPAQIDCFGEYVEPQDCRVSPGGGSKEKEAKPPQEDLKGALVALTSERFGEASLQGPGLGRVCEQEPGGPAGSAPGLPPPQHGAIPLPDEVKTHSSFWKPFQCPECGKGFSRSSNLVRHQRTHEEKSYGCVECGKGFTLREYLMKHQRTHLGKRPYVCSECWKTFSQRHHLEVHQRSHTGEKPYKCGDCWKSFSRRQHLQVHRRTHTGEKPYTCECGKSFSRNANLAVHRRAHTGEKPYGCQVCGKRFSKGERLVRHQRIHTGEKPYHCPACGRSFNQRSILNRHQKTQHRQEPLVQ.

Glycyl lysine isopeptide (Lys-Gly) (interchain with G-Cter in SUMO2) cross-links involve residues lysine 3 and lysine 22. One can recognise an SCAN box domain in the interval 42–124 (RLRFRQFRYQ…AMVEDLTERA (83 aa)). Lysine 128 participates in a covalent cross-link: Glycyl lysine isopeptide (Lys-Gly) (interchain with G-Cter in SUMO2). The tract at residues 157–189 (VEVKPEWGMPPGEGVQGPDPGTEEQLSQDPGDE) is disordered. Glycyl lysine isopeptide (Lys-Gly) (interchain with G-Cter in SUMO2) cross-links involve residues lysine 278 and lysine 285. 6 C2H2-type zinc fingers span residues 348–370 (FQCP…QRTH), 375–397 (YGCV…QRTH), 403–425 (YVCS…QRSH), 431–453 (YKCG…RRTH), 459–480 (YTCE…RRAH), and 486–508 (YGCQ…QRIH). The C2H2-type 7; degenerate zinc finger occupies 514 to 536 (YHCPACGRSFNQRSILNRHQKTQ).

It belongs to the krueppel C2H2-type zinc-finger protein family.

It localises to the nucleus. May be involved in transcriptional regulation. This is Zinc finger and SCAN domain-containing protein 25 (ZSCAN25) from Homo sapiens (Human).